The sequence spans 415 residues: MMQAAWQEISGGLTAPRGFQAAGITAGLKASGQPDLALIVSESDAIAAAVFTTSQVRAACVDFSRQQLDGNSIARAILCNSGQANAATGDQGWSDAVESAEQLAQALQIPSHQVLVASTGVIGQRIKMEALRTGIPQAIAALSPEGGPAAAQAILTTDLVAKQIALELPLGDRTVRIGGIAKGSGMIHPNMATMLSFITCDAAVSPQLWQEMLSRAVDRSFNQITVDGDTSTNDCVFALANGQSRTPAITERGPIADQLEAMLTAVCQHLAKAIARDGEGATCLIEVQVKGTADDAAARAIARTIAGSSLVKSAIFGRDPNWGRIAAAAGRAGVQFNSENLGVRLGEFELLRNGQPLPFDRNAASQYLRDRAAGAYLQDDTVLIQVDVGAGTGQGVAWGCDLSYDYVRINAEYTT.

Substrate is bound by residues threonine 156, lysine 182, threonine 193, glutamate 279, asparagine 410, and threonine 415. Threonine 193 serves as the catalytic Nucleophile.

This sequence belongs to the ArgJ family. In terms of assembly, heterotetramer of two alpha and two beta chains.

The protein resides in the cytoplasm. The enzyme catalyses N(2)-acetyl-L-ornithine + L-glutamate = N-acetyl-L-glutamate + L-ornithine. It carries out the reaction L-glutamate + acetyl-CoA = N-acetyl-L-glutamate + CoA + H(+). Its pathway is amino-acid biosynthesis; L-arginine biosynthesis; L-ornithine and N-acetyl-L-glutamate from L-glutamate and N(2)-acetyl-L-ornithine (cyclic): step 1/1. It participates in amino-acid biosynthesis; L-arginine biosynthesis; N(2)-acetyl-L-ornithine from L-glutamate: step 1/4. In terms of biological role, catalyzes two activities which are involved in the cyclic version of arginine biosynthesis: the synthesis of N-acetylglutamate from glutamate and acetyl-CoA as the acetyl donor, and of ornithine by transacetylation between N(2)-acetylornithine and glutamate. The chain is Arginine biosynthesis bifunctional protein ArgJ from Synechococcus sp. (strain ATCC 27144 / PCC 6301 / SAUG 1402/1) (Anacystis nidulans).